The sequence spans 248 residues: Myelin protein P0 (248 aa).

The first 29 residues, 1-29, serve as a signal peptide directing secretion; that stretch reads MAPGAPSSSPSPILAALLFSSLVLSPTLA. Residues 30 to 143 form the Ig-like V-type domain; the sequence is IVVYTDREVY…DIVGKTSQVT (114 aa). Topologically, residues 30–153 are extracellular; it reads IVVYTDREVY…LYVFEKVPTR (124 aa). Cys50 and Cys127 are disulfide-bonded. A glycan (N-linked (GlcNAc...) (complex) asparagine) is linked at Asn122. Residues 154–179 form a helical membrane-spanning segment; the sequence is YGVVLGAVIGGILGVVLLLLLLFYLI. At 180 to 248 the chain is on the cytoplasmic side; sequence RYCWLRRQAA…GLGESRKDKK (69 aa). Ser210 carries the phosphoserine; by PKC modification. The segment at 222-248 is disordered; it reads MLDHSRSTKAASEKKSKGLGESRKDKK. Positions 224–248 are enriched in basic and acidic residues; sequence DHSRSTKAASEKKSKGLGESRKDKK. Ser226 and Ser228 each carry phosphoserine. Phosphoserine; by PKC is present on Ser233. Ser237 bears the Phosphoserine mark. Ser243 carries the post-translational modification Phosphoserine; by PKC.

It belongs to the myelin P0 protein family. As to quaternary structure, homodimer and homotetramer. In terms of processing, N-glycosylated; contains sulfate-substituted glycan. In terms of tissue distribution, found only in peripheral nervous system Schwann cells.

It localises to the cell membrane. Its function is as follows. Is an adhesion molecule necessary for normal myelination in the peripheral nervous system. It mediates adhesion between adjacent myelin wraps and ultimately drives myelin compaction. This Rattus norvegicus (Rat) protein is Myelin protein P0 (Mpz).